The sequence spans 539 residues: Phenylalanine--tRNA ligase beta subunit (539 aa).

Residues 271 to 347 enclose the B5 domain; it reads LSPARWTVTT…KSYGYENLKA (77 aa). Mg(2+) is bound by residues aspartate 325, aspartate 331, glutamate 334, and aspartate 335.

It belongs to the phenylalanyl-tRNA synthetase beta subunit family. Type 2 subfamily. In terms of assembly, tetramer of two alpha and two beta subunits. Mg(2+) is required as a cofactor.

The protein resides in the cytoplasm. The enzyme catalyses tRNA(Phe) + L-phenylalanine + ATP = L-phenylalanyl-tRNA(Phe) + AMP + diphosphate + H(+). In Methanothrix thermoacetophila (strain DSM 6194 / JCM 14653 / NBRC 101360 / PT) (Methanosaeta thermophila), this protein is Phenylalanine--tRNA ligase beta subunit.